A 313-amino-acid chain; its full sequence is tRNA (guanine-N(7)-)-methyltransferase (313 aa).

The S-adenosyl-L-methionine site is built by E33, E58, and D85. Substrate contacts are provided by residues K112, D144, and T177–E180.

This sequence belongs to the class I-like SAM-binding methyltransferase superfamily. TrmB family.

It catalyses the reaction guanosine(46) in tRNA + S-adenosyl-L-methionine = N(7)-methylguanosine(46) in tRNA + S-adenosyl-L-homocysteine. Its pathway is tRNA modification; N(7)-methylguanine-tRNA biosynthesis. Catalyzes the formation of N(7)-methylguanine at position 46 (m7G46) in tRNA. This Thermotoga maritima (strain ATCC 43589 / DSM 3109 / JCM 10099 / NBRC 100826 / MSB8) protein is tRNA (guanine-N(7)-)-methyltransferase.